The sequence spans 247 residues: 4-hydroxy-tetrahydrodipicolinate reductase (247 aa).

Residues 12–17, 78–80, and 102–105 each bind NAD(+); these read GITGRM, GTT, and AANF. His136 acts as the Proton donor/acceptor in catalysis. His137 is a (S)-2,3,4,5-tetrahydrodipicolinate binding site. Lys140 (proton donor) is an active-site residue. 146–147 serves as a coordination point for (S)-2,3,4,5-tetrahydrodipicolinate; that stretch reads GT.

Belongs to the DapB family.

It is found in the cytoplasm. It catalyses the reaction (S)-2,3,4,5-tetrahydrodipicolinate + NAD(+) + H2O = (2S,4S)-4-hydroxy-2,3,4,5-tetrahydrodipicolinate + NADH + H(+). It carries out the reaction (S)-2,3,4,5-tetrahydrodipicolinate + NADP(+) + H2O = (2S,4S)-4-hydroxy-2,3,4,5-tetrahydrodipicolinate + NADPH + H(+). It participates in amino-acid biosynthesis; L-lysine biosynthesis via DAP pathway; (S)-tetrahydrodipicolinate from L-aspartate: step 4/4. Its function is as follows. Catalyzes the conversion of 4-hydroxy-tetrahydrodipicolinate (HTPA) to tetrahydrodipicolinate. This Acidiphilium cryptum (strain JF-5) protein is 4-hydroxy-tetrahydrodipicolinate reductase.